Reading from the N-terminus, the 657-residue chain is Threonine--tRNA ligase (657 aa).

Residues 1–70 (MSDHKESTGA…NSDAAIEIIT (70 aa)) form the TGS domain. Residues 253–555 (DHRKLGAELE…LIEHTAGNFP (303 aa)) are catalytic. Residues cysteine 351, histidine 402, and histidine 532 each contribute to the Zn(2+) site.

Belongs to the class-II aminoacyl-tRNA synthetase family. Homodimer. Zn(2+) is required as a cofactor.

The protein resides in the cytoplasm. The catalysed reaction is tRNA(Thr) + L-threonine + ATP = L-threonyl-tRNA(Thr) + AMP + diphosphate + H(+). Functionally, catalyzes the attachment of threonine to tRNA(Thr) in a two-step reaction: L-threonine is first activated by ATP to form Thr-AMP and then transferred to the acceptor end of tRNA(Thr). Also edits incorrectly charged L-seryl-tRNA(Thr). The sequence is that of Threonine--tRNA ligase from Chlorobium chlorochromatii (strain CaD3).